Reading from the N-terminus, the 260-residue chain is Na(+)-translocating NADH-quinone reductase subunit C (260 aa).

A helical transmembrane segment spans residues 12–32 (LLVIILLSLACSIIVAGSAVL). Thr-226 is subject to FMN phosphoryl threonine.

Belongs to the NqrC family. Composed of six subunits; NqrA, NqrB, NqrC, NqrD, NqrE and NqrF. FMN serves as cofactor.

The protein localises to the cell inner membrane. The catalysed reaction is a ubiquinone + n Na(+)(in) + NADH + H(+) = a ubiquinol + n Na(+)(out) + NAD(+). NQR complex catalyzes the reduction of ubiquinone-1 to ubiquinol by two successive reactions, coupled with the transport of Na(+) ions from the cytoplasm to the periplasm. NqrA to NqrE are probably involved in the second step, the conversion of ubisemiquinone to ubiquinol. The chain is Na(+)-translocating NADH-quinone reductase subunit C from Pasteurella multocida (strain Pm70).